A 39-amino-acid chain; its full sequence is Photosystem II reaction center protein L (39 aa).

Residues 18–38 form a helical membrane-spanning segment; sequence SLYLGVLSVLVLGILFSSYFF.

This sequence belongs to the PsbL family. In terms of assembly, PSII is composed of 1 copy each of membrane proteins PsbA, PsbB, PsbC, PsbD, PsbE, PsbF, PsbH, PsbI, PsbJ, PsbK, PsbL, PsbM, PsbT, PsbX, PsbY, Psb30/Ycf12, peripheral proteins PsbO, CyanoQ (PsbQ), PsbU, PsbV and a large number of cofactors. It forms dimeric complexes.

Its subcellular location is the cellular thylakoid membrane. In terms of biological role, one of the components of the core complex of photosystem II (PSII). PSII is a light-driven water:plastoquinone oxidoreductase that uses light energy to abstract electrons from H(2)O, generating O(2) and a proton gradient subsequently used for ATP formation. It consists of a core antenna complex that captures photons, and an electron transfer chain that converts photonic excitation into a charge separation. This subunit is found at the monomer-monomer interface and is required for correct PSII assembly and/or dimerization. This is Photosystem II reaction center protein L from Prochlorococcus marinus (strain MIT 9515).